Reading from the N-terminus, the 352-residue chain is MMFHDLSERERQVLSIIIQAYVMNASPVGSRYIARNYNLGLSDATIRNVMADLEDAGYISQPHTSAGRVPTDKGYRYYVDLIMRVQGIDDEEINRIDRNFRLLKYDPKDSADILQAAAKVLGSISQQLSVVISPRLSNALFERLDLVVLSSSRIMVVLSIQSLFVRTIVMELSLEVSRQQIDNVIDLLNQRLSGLTLREIRNSISRRLADCDKDRELLNMIVGSADNLFDDTPVLERLYIAGAEHIVNQPEFDQPQKVRDLVCMIEDKNRMVELLEKEGRVKPVTSSGMDVSISIGRENSATTAEDFTVVTTPYYVGNTIGRLGVLGPKRMDYERVVRLVNYMADRLSHSLS.

Belongs to the HrcA family.

Functionally, negative regulator of class I heat shock genes (grpE-dnaK-dnaJ and groELS operons). Prevents heat-shock induction of these operons. The polypeptide is Heat-inducible transcription repressor HrcA (Chlorobium phaeobacteroides (strain BS1)).